Reading from the N-terminus, the 75-residue chain is Parvalbumin beta 3 (75 aa).

N-acetylalanine is present on Ala-1. An EF-hand domain is found at 26–61 (YKAFFAKKAFFVIDQDKSGFIEEDELKLFLQVFSAG). Ca(2+) contacts are provided by Asp-39, Asp-41, Ser-43, Phe-45, Glu-47, and Glu-50.

Belongs to the parvalbumin family.

In muscle, parvalbumin is thought to be involved in relaxation after contraction. It binds two calcium ions. This Merluccius gayi (South Pacific hake) protein is Parvalbumin beta 3.